Reading from the N-terminus, the 353-residue chain is Stachydrine N-demethylase reductase subunit Stc4 (353 aa).

Residues 11–114 (SDAEPLECVT…IGPAGKFSIV (104 aa)) enclose the FAD-binding FR-type domain. The region spanning 269–353 (AEIAFALSGV…KPLRRVSVEA (85 aa)) is the 2Fe-2S ferredoxin-type domain. [2Fe-2S] cluster is bound by residues Cys-303, Cys-308, Cys-311, and Cys-341.

The protein in the N-terminal section; belongs to the FAD-binding oxidoreductase type 6 family. As to quaternary structure, the system is probably composed of an oxygenase subunit (Stc2) and two reductase subunits (Stc3 and Stc4). Requires FAD as cofactor. [2Fe-2S] cluster serves as cofactor.

Its function is as follows. Reductase involved in the catabolism of stachydrine (L-proline betaine), a source of carbon and nitrogen. Part of a Rieske-type oxygenase system that catalyzes the demethylation of stachydrine to produce N-methyl-L-proline (monomethylproline). This subunit is probably involved in the transfer of electrons from NAD(P)H to the catalytic subunit Stc2. This chain is Stachydrine N-demethylase reductase subunit Stc4, found in Rhizobium meliloti (strain 1021) (Ensifer meliloti).